The following is a 419-amino-acid chain: Heparan-sulfate 6-O-sulfotransferase 3-B (419 aa).

Residues 1 to 7 (MNDKPNK) are Cytoplasmic-facing. A helical; Signal-anchor for type II membrane protein membrane pass occupies residues 8–28 (WIFIPILAILFVMIGYQYVCP). Residues 29-419 (AGGQACHFRT…EDYASQVVRW (391 aa)) lie on the Lumenal side of the membrane. N-linked (GlcNAc...) asparagine glycosylation is present at Asn-77. 101–109 (HIQKTGGTT) contributes to the 3'-phosphoadenylyl sulfate binding site. Residues 131 to 132 (KK), Arg-148, Trp-153, and His-158 each bind substrate. His-158 serves as the catalytic Proton acceptor. Positions 191 and 199 each coordinate 3'-phosphoadenylyl sulfate. 2 residues coordinate substrate: His-203 and Trp-210. Asn-270 and Asn-275 each carry an N-linked (GlcNAc...) asparagine glycan. Residue 323–325 (TQI) participates in 3'-phosphoadenylyl sulfate binding. Asn-326 carries an N-linked (GlcNAc...) asparagine glycan. 329-330 (RA) is a 3'-phosphoadenylyl sulfate binding site. N-linked (GlcNAc...) asparagine glycosylation is found at Asn-393 and Asn-402.

The protein belongs to the sulfotransferase 6 family. In terms of tissue distribution, in early somitogenesis, expressed in presumptive forebrain and midbrain, tail bud and Kupffer's vesicle. During mid-somitogenesis, ubiquitous expression which is strongest in the somites and eye. During late somitogenesis, predominantly expressed in eye, hindbrain and ventral somites. At 24 hours post-fertilization (hpf), restricted to lens and neural retina, brain, otic vesicle and somites. At 36 hpf, brain expression is restricted to telencephalon. At 48 hpf, restricted to telencephalon and pectoral fin.

The protein resides in the membrane. It catalyses the reaction alpha-D-glucosaminyl-[heparan sulfate](n) + 3'-phosphoadenylyl sulfate = 6-sulfo-alpha-D-glucosaminyl-[heparan sulfate](n) + adenosine 3',5'-bisphosphate + H(+). In terms of biological role, 6-O-sulfation enzyme which catalyzes the transfer of sulfate from 3'-phosphoadenosine 5'-phosphosulfate (PAPS) to position 6 of the N-sulfoglucosamine residue (GlcNS) of heparan sulfate. The polypeptide is Heparan-sulfate 6-O-sulfotransferase 3-B (Danio rerio (Zebrafish)).